Consider the following 151-residue polypeptide: D-aminoacyl-tRNA deacylase (151 aa).

The short motif at 136 to 137 (GP) is the Gly-cisPro motif, important for rejection of L-amino acids element.

The protein belongs to the DTD family. As to quaternary structure, homodimer.

It localises to the cytoplasm. The catalysed reaction is glycyl-tRNA(Ala) + H2O = tRNA(Ala) + glycine + H(+). It carries out the reaction a D-aminoacyl-tRNA + H2O = a tRNA + a D-alpha-amino acid + H(+). Its function is as follows. An aminoacyl-tRNA editing enzyme that deacylates mischarged D-aminoacyl-tRNAs. Also deacylates mischarged glycyl-tRNA(Ala), protecting cells against glycine mischarging by AlaRS. Acts via tRNA-based rather than protein-based catalysis; rejects L-amino acids rather than detecting D-amino acids in the active site. By recycling D-aminoacyl-tRNA to D-amino acids and free tRNA molecules, this enzyme counteracts the toxicity associated with the formation of D-aminoacyl-tRNA entities in vivo and helps enforce protein L-homochirality. This Lactococcus lactis subsp. lactis (strain IL1403) (Streptococcus lactis) protein is D-aminoacyl-tRNA deacylase.